A 345-amino-acid chain; its full sequence is tRNA N6-adenosine threonylcarbamoyltransferase (345 aa).

Residues H115 and H119 each coordinate Fe cation. Residues 137–141, D170, G183, D187, and N276 each bind substrate; that span reads LVSGG. D306 lines the Fe cation pocket.

This sequence belongs to the KAE1 / TsaD family. Fe(2+) is required as a cofactor.

Its subcellular location is the cytoplasm. It carries out the reaction L-threonylcarbamoyladenylate + adenosine(37) in tRNA = N(6)-L-threonylcarbamoyladenosine(37) in tRNA + AMP + H(+). Functionally, required for the formation of a threonylcarbamoyl group on adenosine at position 37 (t(6)A37) in tRNAs that read codons beginning with adenine. Is involved in the transfer of the threonylcarbamoyl moiety of threonylcarbamoyl-AMP (TC-AMP) to the N6 group of A37, together with TsaE and TsaB. TsaD likely plays a direct catalytic role in this reaction. The polypeptide is tRNA N6-adenosine threonylcarbamoyltransferase (Pediococcus pentosaceus (strain ATCC 25745 / CCUG 21536 / LMG 10740 / 183-1w)).